Here is a 289-residue protein sequence, read N- to C-terminus: Acetyl-coenzyme A carboxylase carboxyl transferase subunit beta (289 aa).

Residues Met-34–Phe-289 enclose the CoA carboxyltransferase N-terminal domain. Positions 38, 41, 57, and 60 each coordinate Zn(2+). The C4-type zinc-finger motif lies at Cys-38 to Cys-60.

The protein belongs to the AccD/PCCB family. As to quaternary structure, acetyl-CoA carboxylase is a heterohexamer composed of biotin carboxyl carrier protein (AccB), biotin carboxylase (AccC) and two subunits each of ACCase subunit alpha (AccA) and ACCase subunit beta (AccD). Zn(2+) serves as cofactor.

The protein localises to the cytoplasm. It carries out the reaction N(6)-carboxybiotinyl-L-lysyl-[protein] + acetyl-CoA = N(6)-biotinyl-L-lysyl-[protein] + malonyl-CoA. It functions in the pathway lipid metabolism; malonyl-CoA biosynthesis; malonyl-CoA from acetyl-CoA: step 1/1. Its function is as follows. Component of the acetyl coenzyme A carboxylase (ACC) complex. Biotin carboxylase (BC) catalyzes the carboxylation of biotin on its carrier protein (BCCP) and then the CO(2) group is transferred by the transcarboxylase to acetyl-CoA to form malonyl-CoA. This Clostridium botulinum (strain Loch Maree / Type A3) protein is Acetyl-coenzyme A carboxylase carboxyl transferase subunit beta.